The primary structure comprises 431 residues: tRNA(Ile)-lysidine synthase (431 aa).

S25–S30 contacts ATP.

This sequence belongs to the tRNA(Ile)-lysidine synthase family.

It is found in the cytoplasm. The catalysed reaction is cytidine(34) in tRNA(Ile2) + L-lysine + ATP = lysidine(34) in tRNA(Ile2) + AMP + diphosphate + H(+). Ligates lysine onto the cytidine present at position 34 of the AUA codon-specific tRNA(Ile) that contains the anticodon CAU, in an ATP-dependent manner. Cytidine is converted to lysidine, thus changing the amino acid specificity of the tRNA from methionine to isoleucine. The polypeptide is tRNA(Ile)-lysidine synthase (Lactobacillus gasseri (strain ATCC 33323 / DSM 20243 / BCRC 14619 / CIP 102991 / JCM 1131 / KCTC 3163 / NCIMB 11718 / NCTC 13722 / AM63)).